Consider the following 69-residue polypeptide: Large ribosomal subunit protein bL31 (69 aa).

Cys-16, Cys-18, Cys-36, and Cys-39 together coordinate Zn(2+).

The protein belongs to the bacterial ribosomal protein bL31 family. Type A subfamily. As to quaternary structure, part of the 50S ribosomal subunit. Requires Zn(2+) as cofactor.

Its function is as follows. Binds the 23S rRNA. The sequence is that of Large ribosomal subunit protein bL31 from Ruminiclostridium cellulolyticum (strain ATCC 35319 / DSM 5812 / JCM 6584 / H10) (Clostridium cellulolyticum).